The chain runs to 158 residues: Transcription elongation factor GreA (158 aa).

Residues 46-66 (AEYEAAKERQGFIEGRISELE) are a coiled coil.

This sequence belongs to the GreA/GreB family.

In terms of biological role, necessary for efficient RNA polymerase transcription elongation past template-encoded arresting sites. The arresting sites in DNA have the property of trapping a certain fraction of elongating RNA polymerases that pass through, resulting in locked ternary complexes. Cleavage of the nascent transcript by cleavage factors such as GreA or GreB allows the resumption of elongation from the new 3'terminus. GreA releases sequences of 2 to 3 nucleotides. This is Transcription elongation factor GreA from Neisseria meningitidis serogroup B (strain ATCC BAA-335 / MC58).